We begin with the raw amino-acid sequence, 336 residues long: Tetraacyldisaccharide 4'-kinase (336 aa).

60 to 67 (TVGGTGKT) serves as a coordination point for ATP.

Belongs to the LpxK family.

The catalysed reaction is a lipid A disaccharide + ATP = a lipid IVA + ADP + H(+). It functions in the pathway glycolipid biosynthesis; lipid IV(A) biosynthesis; lipid IV(A) from (3R)-3-hydroxytetradecanoyl-[acyl-carrier-protein] and UDP-N-acetyl-alpha-D-glucosamine: step 6/6. Functionally, transfers the gamma-phosphate of ATP to the 4'-position of a tetraacyldisaccharide 1-phosphate intermediate (termed DS-1-P) to form tetraacyldisaccharide 1,4'-bis-phosphate (lipid IVA). In Pseudomonas entomophila (strain L48), this protein is Tetraacyldisaccharide 4'-kinase.